The following is a 140-amino-acid chain: uncharacterized protein (140 aa).

Belongs to the MG439/MG440 family.

This is an uncharacterized protein from Mycoplasma pneumoniae (strain ATCC 29342 / M129 / Subtype 1) (Mycoplasmoides pneumoniae).